We begin with the raw amino-acid sequence, 445 residues long: Histidine--tRNA ligase (445 aa).

This sequence belongs to the class-II aminoacyl-tRNA synthetase family. In terms of assembly, homodimer.

The protein resides in the cytoplasm. The enzyme catalyses tRNA(His) + L-histidine + ATP = L-histidyl-tRNA(His) + AMP + diphosphate + H(+). The chain is Histidine--tRNA ligase from Mycoplasma mobile (strain ATCC 43663 / 163K / NCTC 11711) (Mesomycoplasma mobile).